We begin with the raw amino-acid sequence, 66 residues long: Large ribosomal subunit protein bL33c (66 aa).

Belongs to the bacterial ribosomal protein bL33 family.

Its subcellular location is the plastid. The protein resides in the chloroplast. The protein is Large ribosomal subunit protein bL33c of Acorus calamus (Sweet flag).